Here is a 249-residue protein sequence, read N- to C-terminus: MNLGEKLAEGKTKIVYAHPTDPTLAIIVHKDGISAGDGARRHTIPGKGALSGRTTANVFTMLNRAGVATHFVAAPEPSVMVVYRCAMIPLEVVNRRIATGSYIRRNPDVAEGTRFDPPLLEFFLKDDARHDPQMTPDEIIAQGIASADEVEQMASESRRVFLLIEEAWAAQDVVLCDLKIEFGRDTSGRLLVADVIDNDSWRIWPGGVKERMLDKQVYRNMPVVTDEGLEQVRRLYEEVAQRTDAWVNQ.

It belongs to the SAICAR synthetase family.

It carries out the reaction 5-amino-1-(5-phospho-D-ribosyl)imidazole-4-carboxylate + L-aspartate + ATP = (2S)-2-[5-amino-1-(5-phospho-beta-D-ribosyl)imidazole-4-carboxamido]succinate + ADP + phosphate + 2 H(+). Its pathway is purine metabolism; IMP biosynthesis via de novo pathway; 5-amino-1-(5-phospho-D-ribosyl)imidazole-4-carboxamide from 5-amino-1-(5-phospho-D-ribosyl)imidazole-4-carboxylate: step 1/2. This chain is Phosphoribosylaminoimidazole-succinocarboxamide synthase, found in Roseiflexus sp. (strain RS-1).